We begin with the raw amino-acid sequence, 283 residues long: METFTSIDAMRAWCREKSRGGNTIGLVPTMGALHEGHLSLVHAAKKDCDHCVTSIFVNPTQFAANEDLDQYPRPIEDDLAMLRDAGVEAVFMPTADEMYPGGPQTHATSVHPSAVAFPLEGVHRPEHFVGVATVVMKLFQAAPSDRAFFGRKDLQQLCVIEHMVRDLNLPIEIVPCDIVREPDGLAMSSRNRYLSDDQRQRALCISKSLNQVEQAFLEGNHDPKQLESIMADHLSPCDSVDYAVVVDRQTLLPISEITQNAVALVAVRVGVTRLIDNRELIVA.

ATP is bound at residue 30-37; it reads MGALHEGH. The Proton donor role is filled by histidine 37. Glutamine 61 lines the (R)-pantoate pocket. Glutamine 61 contacts beta-alanine. Residue 150 to 153 participates in ATP binding; it reads GRKD. Glutamine 156 lines the (R)-pantoate pocket. ATP is bound by residues valine 179 and 187–190; that span reads MSSR.

It belongs to the pantothenate synthetase family. Homodimer.

Its subcellular location is the cytoplasm. The enzyme catalyses (R)-pantoate + beta-alanine + ATP = (R)-pantothenate + AMP + diphosphate + H(+). Its pathway is cofactor biosynthesis; (R)-pantothenate biosynthesis; (R)-pantothenate from (R)-pantoate and beta-alanine: step 1/1. Its function is as follows. Catalyzes the condensation of pantoate with beta-alanine in an ATP-dependent reaction via a pantoyl-adenylate intermediate. The protein is Pantothenate synthetase of Rhodopirellula baltica (strain DSM 10527 / NCIMB 13988 / SH1).